The primary structure comprises 3601 residues: MKWATLLKDIKEKVGLAQSSDSDPFPVDLTAPPSSSSSSSSPSFTYPSSSSLHHFNFSPSSRDNHELELDFKRLWEEFRSSSSEKEKEAALNLTVDIFCRLVKRHANVDQLVTMLVETHIFSFVIGRAFVTDIEKLKIGSKTRSLNVEKVLRFFSDVTKEGFSPGANLLTAVEVLVSGPIDKQSLLDSGIFCCLIHVLIALLAYDELSKSKITGDLEVVSAEKDAGYIVLQTRRLEVEGSVVHIMKALASNPSAAQSLIEDDSLESLFNMVANGSITVFSQYKEGLVPLHNIQLHRHAMQILGLLLVNDNGSTARYIRKHHLIKVLLMAVKEFDPSCGDSAYTMGIVDLLLECVELSYRPEAGGVRLREDIRNAHGYHFLVQFALVLSSLPKNPIFVSSNHDSGSDDPEVFHDGENTNSTENADFSSQNFAPSLSRLLDVLVTLAQTGPAEPSVGRASRSSQTKPTGHSRSRTSSVDSIYDETWEQGSGKVKDLEAVQMLQDIFLKAENKDLQAEVLNRMFKIFSSHVENYRLCQELRTVPLLVLNMAGFPSSLQDIILKILEYAVTVVNCVPEQELLSLCCLLQQPITSQLKHTILSFFVKLISFDQQYKKVLREVGVLEVLQDDLKQHKLLIGPDQYSGVSSHSDRKPSSGSFRKNLDTKDAIISSPKLMESGSGKLPVFEVDNTITVGWDCLISLLKKAEANQSSFRAANGVAIILPFLISDAHRSGVLRILSCLITEDTKQVHHDELGAVVDLLKSGMVTGISGHQYKLHDDAKCDTMGALWRIVGVNGSAQRVFGEATGFSLLLTTLHTFQGKREHMDESDLTVYIKLFKYLFRLMTAAVCENAVNRMKLHAVITSQTFFELLAESGLLCVELERQVIQLLLELALEVVVPPFLTSESTALATIPENENTTFVVTTPSGQFNPDKERIYNAGAVRVLIRSLLLFSPKMQLEFLRLLESLARASPFNQENLTSIGCVELLLEIIYPFLAGSSPFLSYALKIVEILGAYRLSPSELRMLFRYVLQMRIMNSGHAIVGMMEKLILMEDTALEHLSLAPFVELDMSKTGHASVQVSLGERSWPPAAGYSFVCWFQFRNFLTTQGKESEASKAGGSSKTRMTSAQQHEQNIFRMFSVGAVSNESPFYAELYFQEDGILTLATSNSHSLSFSGLEIEEGRWHHLAVVHSKPNALAGLFQASVAYVYLDGKLRHTGKLGYSPSPVGKSLQVTVGTPATCARVSDLTWKTRSCYLFEEVLTSGCIGFMYILGRGYKGLFQDADLLRFVPNQACGGGSMAILDSLDTDMTSSSNGQKFDGSNRQGDSKADGSGIVWDLERLGNLAFQLPGKKLIFAFDGTCSEFIRASGNFSLLNLVDPLSAAASPIGGIPRFGRLVGNVSICRQSVIGDTIRPVGGMTVVLALVEAAESRNMLHMALSLLACALHQNPQNVKDMQTIRGYHLLALFLRPKMTLFDMQSLEIFFQIAACEALFSEPKKLESVQSNITMPPTETIFENSYEDLSLSRFRYDSSSVGSHGDMDDFSVPKDSFSHLSELETDIPVETSNCIVLSNADMVEHVLLDWTLWVTSPVSIQIALLGFLENLVSMHWYRNHNLTILRRINLVEHLLVTLQRGDVEVPVLEKLVVLLGCILEDGFLTSELENVVRFVIMTFNPPEVKSRSSLLRESMGKHVIVRNMLLEMLIDLQVTIKAEDLLELWHKIVSSKLITYFLDEAVHPTSMRWIMTLLGVCLASSPNFSLKFRTSGGYQGLLRVLQNFYDSPDIYYILFCLIFGKPVYPRLPEVRMLDFHALVPNDGSYVELKFIELLDSVVAMAKSTYDRLIMQSMLAHQSGNLSQVSASLVAELIEGAEMTGELQGEALMHKTYAARLMGGEASAPAAATSVLRFMVDLAKMCPQFSTACRRAEFVENCADLYFSCVRAAYAVKMAKQLSVKAEEKHINDADDSGSQGSLPHDQDQSTKTSISVGSFPQGQVSLGSEDMSLPANYVVNDKMENILPPPTQDTSKSLQGVEDVKKQDDHHVGPSASSERDFQDFTGNPVQVQATDSQSSASFPMIESPLLSEKSSLKVSFTPSPSPVVALASWLGSNYNESKSSTLGSPSLESYVSVNEVDASSERKSGSQGSSAANAFFTVSPKLLLETDETGYGGGPCSAGASAVLDFMAEALADLVTEQIKAVPVLESILEMVPFYVDPESVLVFQGLCLSRVMNYLERRLLRDDEEDEKKLDKAKWSVNLDAFCWMIVDRVYMGAFSQPAGVLRALEFLLSMLQLANKDGRVEEVTPSGKGLLSLGRATRQLDAYVHSILKNTNRMVLYCFLPSFLITIGEEDLLSQLGLLVESKKRPSPNPATDESGIDISTVLQLLVANRRIIFCPSNLDTDLNCCLCVNLISLLLDQRKSVQNMSLDIVKYLLVHRRSALEDLLVTKPNQGQNFDVLHGGFDKLLTGNLPEFFKWLESSDKIINKVLEQCAAIMWVQYIAGSAKFPGVRIKGMEGRRKREMGRKSRDMSKLDLKHWDQLNERRYALEVLRDAMSTELRVVRQNKYGWILHAESEWQTHLQQLVHERGIFPMRKSKGTEDPEWQLCPIEGPYRMRKKLERCKLKIDSIQNVLDGKLELGEIELPKVKNEDGPVISDTDSEPPFLLSELYDESFLKESDDFKDVASARNGWNDDRASSTNEASLHSALDFGGKSSIASVPITDTTHVKSETGSPRHSSSAKMDETNGREEKSEKELNDDGEYLIRPYLEHLEKIRFRYNCERVVDLDKHDGIFLIGEFCLYVIENFYIDEDGCICEKECEDELSVIDQALGVKKDVSGSSDFHSKSSTSWTTTVKTGAVGGRAWAYGGGAWGKEKMCMTGNLPHPWRMWKLNNVHEILKRDYQLRPVAIEIFSMDGCNDLLVFHKKEREEVFKNLVAMNLPRNSMLDTTISGSAKQESNEGGRLFKLMAKSFSKRWQNGEISNFQYLMHLNTLAGRGYSDLTQYPVFPWVLADYDSESLDFSDPKTFRKLHKPMGCQTPEGEEEFRKRYESWDDPEVPKFHYGSHYSSAGIVLFYLIRLPPFSSENQKLQGGQFDHADRLFNSIKDTWLSAAGKGNTSDVKELIPEFFYMPEFLENRFSLDLGEKQSGEKVGDVFLPPWARGSVREFILKHREALESDYVSENLHHWIDLIFGYKQRGKAAEEAVNVFYHYTYEGNVDIDAVTDPAMKASILAQINHFGQTPKQLFPKAHVKRRTDRKIPLHPLKHSMHLVPHEIRKCSSSISQIITFHDKVLVAGANCFLKPRGYTKYITWGFPDRSLRFMSYDQDKLLSTHENLHESNQIQCAGVSHDGRIVVTGAEDGLVCVWRVSKDGPRGSRRLRLEKALCAHTAKVTCLRVSQPYMMIASGSDDCTVIIWDLSSLSFVRQLPDFPVPISAIYINDLTGEIVTAAGTVLAVWSINGDCLAVANTSQLPSDSVLSVTGSTSSDWLETSWYVTGHQSGAVKVWRMIHCTDPVSAESKTSSSNRTGGLNLGDQVPEYKLILHKVLKFHKQPVTALHLTSDLKQLLSGDSAGQLLSWTVPDETLRASMKQASLKQASLKQASLKQASSV.

Disordered stretches follow at residues 17 to 50, 398 to 426, 449 to 476, 638 to 657, 1954 to 1993, 2009 to 2049, and 2715 to 2747; these read AQSS…PSSS, SSNH…ADFS, PAEP…TSSV, QYSG…SFRK, HIND…SLGS, ENIL…DFQD, and TTHV…EKEL. Residues 32–50 are compositionally biased toward low complexity; it reads PPSSSSSSSSPSFTYPSSS. Composition is skewed to polar residues over residues 416 to 426 and 458 to 476; these read NTNSTENADFS and SRSS…TSSV. Polar residues predominate over residues 1974 to 1991; it reads STKTSISVGSFPQGQVSL. The span at 2027–2048 shows a compositional bias: basic and acidic residues; sequence EDVKKQDDHHVGPSASSERDFQ. Residues 2715–2731 are compositionally biased toward polar residues; the sequence is TTHVKSETGSPRHSSSA. Residues 2732–2747 show a composition bias toward basic and acidic residues; the sequence is KMDETNGREEKSEKEL. Residues 2760 to 2927 form the BEACH-type PH domain; that stretch reads EHLEKIRFRY…EREEVFKNLV (168 aa). Positions 2952 to 3244 constitute a BEACH domain; the sequence is GGRLFKLMAK…QLFPKAHVKR (293 aa). WD repeat units lie at residues 3328 to 3367, 3378 to 3417, 3464 to 3507, and 3540 to 3579; these read HESN…PRGS, AHTA…FVRQ, PSDS…DPVS, and FHKQ…LRAS.

Interacts with DCP1. In terms of tissue distribution, expressed in flowers, leaves, stems, hypocotyls and roots.

The protein resides in the cytoplasm. It localises to the P-body. Functionally, involved in cell morphogenesis. May have a function in membrane fusion or membrane composition. Required for salt stress tolerance. Regulates the salt stress-dependent post-transcriptional stabilization, cytoplasmic agglomeration, and localization to P-bodies of a subset of salt stress-regulated mRNAs. This is Protein SPIRRIG from Arabidopsis thaliana (Mouse-ear cress).